A 779-amino-acid chain; its full sequence is Aconitate hydratase, mitochondrial (779 aa).

Residues 1–28 (MIAMDRIARIPIARWTSRAFRVSAAARQ) constitute a mitochondrion transit peptide. Residues Gln-97 and 190-192 (DSH) contribute to the substrate site. [4Fe-4S] cluster contacts are provided by Cys-383, Cys-446, and Cys-449. Substrate contacts are provided by residues Arg-472, Arg-477, Arg-605, and 668–669 (SR).

The protein belongs to the aconitase/IPM isomerase family. Monomer. It depends on [4Fe-4S] cluster as a cofactor.

Its subcellular location is the mitochondrion. The catalysed reaction is citrate = D-threo-isocitrate. The protein operates within carbohydrate metabolism; tricarboxylic acid cycle; isocitrate from oxaloacetate: step 2/2. In terms of biological role, catalyzes the isomerization of citrate to isocitrate via cis-aconitate. In Gracilaria gracilis (Red alga), this protein is Aconitate hydratase, mitochondrial.